Here is a 348-residue protein sequence, read N- to C-terminus: MQHELMDNHDFLAFTLAHPHGIAQRFSFELGQHTQVEVWDTGVIAFLPKEKYTAQAPKQVILSCAVHGNETAPIEICNRLITELLTEKVQAKHRTLFLIGNPPAIHNQTRFIEENMNRLFSGAHSKGEGLTHAERIRAKALEDYVAEFYLGAPSNEQRIHYDLHTAIRPSKHEKFAIYPYRPGRAYSGEQIMFLAACGVDTILFHHEPTTTFSYYSSEQFNADAFTVELGKVMPFGQNDMSRFEQTQTMLTKLVSGEALGLSAFSAEKVNLYKVCRSINKRFEDFAFNFADQAENFSAFTKGEVLATEGGEQVLVEQPQEAIVFPNAKVPVGQRTVLCLVPAPNENIR.

Histidine 67, glutamate 70, and histidine 164 together coordinate Zn(2+). The active site involves glutamate 228.

The protein belongs to the AspA/AstE family. Succinylglutamate desuccinylase subfamily. Zn(2+) serves as cofactor.

The enzyme catalyses N-succinyl-L-glutamate + H2O = L-glutamate + succinate. Its pathway is amino-acid degradation; L-arginine degradation via AST pathway; L-glutamate and succinate from L-arginine: step 5/5. In terms of biological role, transforms N(2)-succinylglutamate into succinate and glutamate. The polypeptide is Succinylglutamate desuccinylase (Shewanella denitrificans (strain OS217 / ATCC BAA-1090 / DSM 15013)).